The following is a 77-amino-acid chain: Liver-expressed antimicrobial peptide 2 (77 aa).

A signal peptide spans 1-22 (MWHLKLCAVLMIFLLLLGQIDG). Positions 23-37 (SPIPEVSSAKRRPRR) are excised as a propeptide. Disulfide bonds link cysteine 54/cysteine 65 and cysteine 60/cysteine 70.

This sequence belongs to the LEAP2 family.

Its subcellular location is the secreted. Its function is as follows. Has an antimicrobial activity. This Homo sapiens (Human) protein is Liver-expressed antimicrobial peptide 2 (LEAP2).